The following is a 465-amino-acid chain: Ribulose bisphosphate carboxylase large chain (465 aa).

Position 4 is an N6,N6,N6-trimethyllysine (Lys-4). Substrate is bound by residues Asn-113 and Thr-163. The active-site Proton acceptor is Lys-165. Residue Lys-167 participates in substrate binding. Positions 191, 193, and 194 each coordinate Mg(2+). Lys-191 is modified (N6-carboxylysine). His-284 (proton acceptor) is an active-site residue. Arg-285, His-317, and Ser-369 together coordinate substrate.

This sequence belongs to the RuBisCO large chain family. Type I subfamily. In terms of assembly, heterohexadecamer of 8 large chains and 8 small chains; disulfide-linked. The disulfide link is formed within the large subunit homodimers. Requires Mg(2+) as cofactor. Post-translationally, the disulfide bond which can form in the large chain dimeric partners within the hexadecamer appears to be associated with oxidative stress and protein turnover.

It is found in the plastid. The protein localises to the chloroplast. The catalysed reaction is 2 (2R)-3-phosphoglycerate + 2 H(+) = D-ribulose 1,5-bisphosphate + CO2 + H2O. The enzyme catalyses D-ribulose 1,5-bisphosphate + O2 = 2-phosphoglycolate + (2R)-3-phosphoglycerate + 2 H(+). RuBisCO catalyzes two reactions: the carboxylation of D-ribulose 1,5-bisphosphate, the primary event in carbon dioxide fixation, as well as the oxidative fragmentation of the pentose substrate in the photorespiration process. Both reactions occur simultaneously and in competition at the same active site. The chain is Ribulose bisphosphate carboxylase large chain from Nepenthes alata (Winged pitcher plant).